The chain runs to 246 residues: Uridylate kinase (246 aa).

Residue 16 to 19 (KFSG) coordinates ATP. Residue G58 participates in UMP binding. ATP is bound by residues G59 and R63. UMP-binding positions include D78 and 139–146 (TGNPFFTT). 3 residues coordinate ATP: T166, Y172, and D175.

It belongs to the UMP kinase family. Homohexamer.

Its subcellular location is the cytoplasm. The enzyme catalyses UMP + ATP = UDP + ADP. The protein operates within pyrimidine metabolism; CTP biosynthesis via de novo pathway; UDP from UMP (UMPK route): step 1/1. Inhibited by UTP. Its function is as follows. Catalyzes the reversible phosphorylation of UMP to UDP. The polypeptide is Uridylate kinase (Legionella pneumophila (strain Corby)).